The following is an 87-amino-acid chain: Potassium channel toxin Tdi-beta-KTx (87 aa).

The first 19 residues, Met1–Ser19, serve as a signal peptide directing secretion. The propeptide occupies Gly20–Gln27. A BetaSPN-type CS-alpha/beta domain is found at Gln53–Ser87. Cystine bridges form between Cys56/Cys77, Cys63/Cys82, and Cys67/Cys84.

In terms of tissue distribution, expressed by the venom gland.

The protein localises to the secreted. Functionally, inhibits voltage-gated potassium channel. This Tityus discrepans (Venezuelan scorpion) protein is Potassium channel toxin Tdi-beta-KTx.